Reading from the N-terminus, the 472-residue chain is UDP-N-acetylmuramate--L-alanine ligase (472 aa).

122-128 is an ATP binding site; sequence GSHGKTT.

Belongs to the MurCDEF family.

Its subcellular location is the cytoplasm. It carries out the reaction UDP-N-acetyl-alpha-D-muramate + L-alanine + ATP = UDP-N-acetyl-alpha-D-muramoyl-L-alanine + ADP + phosphate + H(+). It participates in cell wall biogenesis; peptidoglycan biosynthesis. Cell wall formation. The protein is UDP-N-acetylmuramate--L-alanine ligase of Prochlorococcus marinus (strain SARG / CCMP1375 / SS120).